We begin with the raw amino-acid sequence, 522 residues long: BTB/POZ domain-containing protein 3 (522 aa).

The region spanning 120–190 (ADVHFVVGPP…IYCDEIDLAA (71 aa)) is the BTB domain. One can recognise a BACK domain in the interval 235–300 (FEEPDLTQRC…NWAEVECQRQ (66 aa)).

In terms of tissue distribution, strongly expressed in the primary visual cortex.

It is found in the cytoplasm. The protein resides in the cytosol. Its subcellular location is the nucleus. Its function is as follows. Acts as a key regulator of dendritic field orientation during development of sensory cortex. Also directs dendrites toward active axon terminals when ectopically expressed. The sequence is that of BTB/POZ domain-containing protein 3 (BTBD3) from Callithrix jacchus (White-tufted-ear marmoset).